Reading from the N-terminus, the 142-residue chain is MLMPKRVKYRKQQRGRMRGEAKGGTTVDFGEWGLKALAPAWITAQQIEAGRIAIMRVMKRSGKLWIRVFPDKPYTKKPAESRQGKGKGNVEGWVSVVKPGKIIFEIAGVDENTAKEALKYAASKFPIPTKIVSRSNIGGEAV.

This sequence belongs to the universal ribosomal protein uL16 family. In terms of assembly, part of the 50S ribosomal subunit.

Functionally, binds 23S rRNA and is also seen to make contacts with the A and possibly P site tRNAs. This chain is Large ribosomal subunit protein uL16, found in Pseudothermotoga lettingae (strain ATCC BAA-301 / DSM 14385 / NBRC 107922 / TMO) (Thermotoga lettingae).